A 229-amino-acid polypeptide reads, in one-letter code: DNA mismatch repair protein MutH (229 aa).

Belongs to the MutH family.

The protein localises to the cytoplasm. Sequence-specific endonuclease that cleaves unmethylated GATC sequences. It is involved in DNA mismatch repair. The chain is DNA mismatch repair protein MutH from Shigella boydii serotype 18 (strain CDC 3083-94 / BS512).